The sequence spans 239 residues: Pyridoxine 5'-phosphate synthase (239 aa).

A 3-amino-2-oxopropyl phosphate-binding site is contributed by asparagine 7. Aspartate 9–histidine 10 contacts 1-deoxy-D-xylulose 5-phosphate. Residue arginine 18 participates in 3-amino-2-oxopropyl phosphate binding. Histidine 43 (proton acceptor) is an active-site residue. 2 residues coordinate 1-deoxy-D-xylulose 5-phosphate: arginine 45 and histidine 50. Glutamate 70 functions as the Proton acceptor in the catalytic mechanism. A 1-deoxy-D-xylulose 5-phosphate-binding site is contributed by threonine 100. Histidine 191 functions as the Proton donor in the catalytic mechanism. 3-amino-2-oxopropyl phosphate contacts are provided by residues glycine 192 and glycine 213–histidine 214.

It belongs to the PNP synthase family. Homooctamer; tetramer of dimers.

It is found in the cytoplasm. The catalysed reaction is 3-amino-2-oxopropyl phosphate + 1-deoxy-D-xylulose 5-phosphate = pyridoxine 5'-phosphate + phosphate + 2 H2O + H(+). Its pathway is cofactor biosynthesis; pyridoxine 5'-phosphate biosynthesis; pyridoxine 5'-phosphate from D-erythrose 4-phosphate: step 5/5. Functionally, catalyzes the complicated ring closure reaction between the two acyclic compounds 1-deoxy-D-xylulose-5-phosphate (DXP) and 3-amino-2-oxopropyl phosphate (1-amino-acetone-3-phosphate or AAP) to form pyridoxine 5'-phosphate (PNP) and inorganic phosphate. This is Pyridoxine 5'-phosphate synthase from Geobacter sp. (strain M21).